A 360-amino-acid chain; its full sequence is Phosphoserine aminotransferase (360 aa).

L-glutamate is bound at residue arginine 41. The pyridoxal 5'-phosphate site is built by tryptophan 101, threonine 152, aspartate 172, and glutamine 195. The residue at position 196 (lysine 196) is an N6-(pyridoxal phosphate)lysine. 237–238 serves as a coordination point for pyridoxal 5'-phosphate; the sequence is NT.

It belongs to the class-V pyridoxal-phosphate-dependent aminotransferase family. SerC subfamily. Homodimer. It depends on pyridoxal 5'-phosphate as a cofactor.

It is found in the cytoplasm. It catalyses the reaction O-phospho-L-serine + 2-oxoglutarate = 3-phosphooxypyruvate + L-glutamate. The enzyme catalyses 4-(phosphooxy)-L-threonine + 2-oxoglutarate = (R)-3-hydroxy-2-oxo-4-phosphooxybutanoate + L-glutamate. It participates in amino-acid biosynthesis; L-serine biosynthesis; L-serine from 3-phospho-D-glycerate: step 2/3. It functions in the pathway cofactor biosynthesis; pyridoxine 5'-phosphate biosynthesis; pyridoxine 5'-phosphate from D-erythrose 4-phosphate: step 3/5. In terms of biological role, catalyzes the reversible conversion of 3-phosphohydroxypyruvate to phosphoserine and of 3-hydroxy-2-oxo-4-phosphonooxybutanoate to phosphohydroxythreonine. The polypeptide is Phosphoserine aminotransferase (Burkholderia cenocepacia (strain ATCC BAA-245 / DSM 16553 / LMG 16656 / NCTC 13227 / J2315 / CF5610) (Burkholderia cepacia (strain J2315))).